The following is a 266-amino-acid chain: Electron transfer flavoprotein subunit beta (266 aa).

This sequence belongs to the ETF beta-subunit/FixA family. Heterodimer of an alpha and a beta subunit. FAD serves as cofactor. It depends on AMP as a cofactor.

Its function is as follows. The electron transfer flavoprotein serves as a specific electron acceptor for other dehydrogenases. It transfers the electrons to the main respiratory chain via ETF-ubiquinone oxidoreductase (ETF dehydrogenase). In Mycobacterium leprae (strain TN), this protein is Electron transfer flavoprotein subunit beta (etfB).